Reading from the N-terminus, the 182-residue chain is ATP-dependent protease subunit HslV (182 aa).

T6 is a catalytic residue. Residues A164, C167, and T170 each coordinate Na(+).

This sequence belongs to the peptidase T1B family. HslV subfamily. A double ring-shaped homohexamer of HslV is capped on each side by a ring-shaped HslU homohexamer. The assembly of the HslU/HslV complex is dependent on binding of ATP.

The protein localises to the cytoplasm. It catalyses the reaction ATP-dependent cleavage of peptide bonds with broad specificity.. Its activity is regulated as follows. Allosterically activated by HslU binding. Functionally, protease subunit of a proteasome-like degradation complex believed to be a general protein degrading machinery. The polypeptide is ATP-dependent protease subunit HslV (Borreliella afzelii (strain PKo) (Borrelia afzelii)).